The primary structure comprises 554 residues: Cytochrome P450 monooxygenase himC (554 aa).

The chain crosses the membrane as a helical span at residues 52 to 72; that stretch reads YSVASVAIAGFTALVVSVALY. Asparagine 110, asparagine 328, asparagine 414, and asparagine 425 each carry an N-linked (GlcNAc...) asparagine glycan. Cysteine 501 lines the heme pocket.

The protein belongs to the cytochrome P450 family. Heme serves as cofactor.

It localises to the membrane. It functions in the pathway secondary metabolite biosynthesis. Its function is as follows. Cytochrome P450 monooxygenase; part of the him gene cluster that mediates the biosynthesis of himeic acid A, a ubiquitin-activating enzyme (E1) inhibitor. First, himA, together with the trans-enoyl reductase himH, catalyzes the formation of apolyketide chain, which is then condensed with leucine by the NRPS activity of himA. Dieckmann cyclization and release from himA gives a tetramic acid intermediate as the product of himA PKS-NRPS. HimG then catalyzes alpha-oxidation of the tetramic acid ring, with a subsequent rearrangement to yield apyrone intermediate. Two terminal methyl groups of polyketide and amide side chains are oxidized to carboxylic acids by himC cytochrome P450 monooxygenase to form himeic acid A. Himeic acid A is further converted to himeic acid B and C during culture growth. No gene responsible for pyrone to pyridone conversion was found in the him gene cluster and himeic acid A is non-enzymatically converted to himeic acid C by the incorporation of an ammonium nitrogen atom in a pH5 buffer, and to himeic acid B at a conversion ratio of 50% during incubation in MeOH for 5 days. The chain is Cytochrome P450 monooxygenase himC from Aspergillus japonicus.